Here is a 210-residue protein sequence, read N- to C-terminus: Thymidylate kinase (210 aa).

Aspartate 17 contributes to the dGMP binding site. Aspartate 17 is a dTMP binding site. 6 residues coordinate ATP: arginine 18, serine 19, glycine 20, lysine 21, serine 22, and threonine 23. DTMP contacts are provided by arginine 47, phenylalanine 74, arginine 78, arginine 99, and tyrosine 107. The dGMP site is built by phenylalanine 74, arginine 78, arginine 99, tyrosine 107, serine 108, and tyrosine 153. The segment at 143–155 is LID; sequence QNRSDYGEEIYEK. Position 182 (arginine 182) interacts with ATP.

This sequence belongs to the thymidylate kinase family. Homodimer. Binds two dTMP molecules per dimer. Binds only one dTGP molecule per dimer.

It carries out the reaction dTMP + ATP = dTDP + ADP. The enzyme catalyses dGMP + ATP = dGDP + ADP. It participates in pyrimidine metabolism; dTTP biosynthesis. With respect to regulation, inhibited by deoxyguanosine (dG), deoxythymidine (dT) and azidothymidine (AZT). In terms of biological role, catalyzes the phosphorylation of thymidine monophosphate (dTMP) to thymidine diphosphate (dTDP), the immediate precursor for the DNA building block dTTP. Can also phosphorylate dGMP and to a lesser extent GMP, dUMP and dIMP. Can use either ATP or dATP as phosphate donors in presence of Mg(2+). This is Thymidylate kinase from Plasmodium falciparum (isolate 3D7).